The chain runs to 511 residues: Maturase K (511 aa).

It belongs to the intron maturase 2 family. MatK subfamily.

The protein resides in the plastid. The protein localises to the chloroplast. In terms of biological role, usually encoded in the trnK tRNA gene intron. Probably assists in splicing its own and other chloroplast group II introns. The protein is Maturase K of Paulownia tomentosa (Princess tree).